Reading from the N-terminus, the 158-residue chain is 2-C-methyl-D-erythritol 2,4-cyclodiphosphate synthase (158 aa).

Residues D9 and H11 each contribute to the a divalent metal cation site. 4-CDP-2-C-methyl-D-erythritol 2-phosphate-binding positions include 9-11 and 35-36; these read DVH and HS. Residue H43 participates in a divalent metal cation binding. Residues 57 to 59, 62 to 66, 133 to 136, F140, and R143 contribute to the 4-CDP-2-C-methyl-D-erythritol 2-phosphate site; these read DIG, FPDTD, and TTTE.

It belongs to the IspF family. As to quaternary structure, homotrimer. Requires a divalent metal cation as cofactor.

It catalyses the reaction 4-CDP-2-C-methyl-D-erythritol 2-phosphate = 2-C-methyl-D-erythritol 2,4-cyclic diphosphate + CMP. It functions in the pathway isoprenoid biosynthesis; isopentenyl diphosphate biosynthesis via DXP pathway; isopentenyl diphosphate from 1-deoxy-D-xylulose 5-phosphate: step 4/6. Its function is as follows. Involved in the biosynthesis of isopentenyl diphosphate (IPP) and dimethylallyl diphosphate (DMAPP), two major building blocks of isoprenoid compounds. Catalyzes the conversion of 4-diphosphocytidyl-2-C-methyl-D-erythritol 2-phosphate (CDP-ME2P) to 2-C-methyl-D-erythritol 2,4-cyclodiphosphate (ME-CPP) with a corresponding release of cytidine 5-monophosphate (CMP). The protein is 2-C-methyl-D-erythritol 2,4-cyclodiphosphate synthase of Haemophilus influenzae (strain PittEE).